A 362-amino-acid polypeptide reads, in one-letter code: Endopolygalacturonase II (362 aa).

An N-terminal signal peptide occupies residues 1–21 (MHSFASLLAYGLAASATLASA). The propeptide occupies 22-27 (SPIEAR). Cys-30 and Cys-45 are disulfide-bonded. The PbH1 1 repeat unit spans residues 156–186 (ADDITLTDITINNADGDTLGGHNTDAFDVGN). The Proton donor role is filled by Asp-201. An intrachain disulfide couples Cys-203 to Cys-219. His-223 is an active-site residue. PbH1 repeat units follow at residues 238–259 (VKNVTIEHSTVSNSENAVRIKT), 267–289 (VSEITYSNIVMSGISDYGVVIQQ), and 301–322 (TNGVTITDVKLESVTGTVDSKA). The N-linked (GlcNAc...) (high mannose) asparagine glycan is linked to Asn-240. Intrachain disulfides connect Cys-329–Cys-334 and Cys-353–Cys-362.

It belongs to the glycosyl hydrolase 28 family.

It localises to the secreted. The catalysed reaction is (1,4-alpha-D-galacturonosyl)n+m + H2O = (1,4-alpha-D-galacturonosyl)n + (1,4-alpha-D-galacturonosyl)m.. Its function is as follows. Involved in maceration and soft-rotting of plant tissue. Hydrolyzes the 1,4-alpha glycosidic bonds of de-esterified pectate in the smooth region of the plant cell wall. This Aspergillus niger protein is Endopolygalacturonase II.